Consider the following 313-residue polypeptide: Putative adhesin P1-like protein MPN_202 (313 aa).

A compositionally biased stretch (low complexity) spans 1–16 (MGSQNQGSTTTTSAGN). The interval 1 to 44 (MGSQNQGSTTTTSAGNPDSLVTDKVDQKGQVQTSGQNLSDTNYT) is disordered. The segment covering 29–44 (GQVQTSGQNLSDTNYT) has biased composition (polar residues).

Belongs to the adhesin P1 family.

This Mycoplasma pneumoniae (strain ATCC 29342 / M129 / Subtype 1) (Mycoplasmoides pneumoniae) protein is Putative adhesin P1-like protein MPN_202.